A 106-amino-acid polypeptide reads, in one-letter code: DNA-directed RNA polymerase subunit Rpo6 (106 aa).

This sequence belongs to the archaeal Rpo6/eukaryotic RPB6 RNA polymerase subunit family. As to quaternary structure, part of the RNA polymerase complex.

Its subcellular location is the cytoplasm. The catalysed reaction is RNA(n) + a ribonucleoside 5'-triphosphate = RNA(n+1) + diphosphate. DNA-dependent RNA polymerase (RNAP) catalyzes the transcription of DNA into RNA using the four ribonucleoside triphosphates as substrates. The chain is DNA-directed RNA polymerase subunit Rpo6 from Pyrobaculum aerophilum (strain ATCC 51768 / DSM 7523 / JCM 9630 / CIP 104966 / NBRC 100827 / IM2).